A 97-amino-acid polypeptide reads, in one-letter code: Large ribosomal subunit protein uL23 (97 aa).

It belongs to the universal ribosomal protein uL23 family. In terms of assembly, part of the 50S ribosomal subunit. Contacts protein L29, and trigger factor when it is bound to the ribosome.

Functionally, one of the early assembly proteins it binds 23S rRNA. One of the proteins that surrounds the polypeptide exit tunnel on the outside of the ribosome. Forms the main docking site for trigger factor binding to the ribosome. The protein is Large ribosomal subunit protein uL23 of Thermoanaerobacter pseudethanolicus (strain ATCC 33223 / 39E) (Clostridium thermohydrosulfuricum).